The primary structure comprises 650 residues: Acetyl-coenzyme A synthetase (650 aa).

CoA contacts are provided by residues 191-194 (RAGR), Thr-311, and Asn-335. Residues 387–389 (GEP), 411–416 (DTWWQT), Asp-500, and Arg-515 each bind ATP. Ser-523 contributes to the CoA binding site. Residue Arg-526 participates in ATP binding. Residues Val-537, His-539, and Val-542 each coordinate Mg(2+). Arg-584 serves as a coordination point for CoA. Lys-609 bears the N6-acetyllysine mark.

It belongs to the ATP-dependent AMP-binding enzyme family. Mg(2+) is required as a cofactor. In terms of processing, acetylated. Deacetylation by the SIR2-homolog deacetylase activates the enzyme.

The catalysed reaction is acetate + ATP + CoA = acetyl-CoA + AMP + diphosphate. Its function is as follows. Catalyzes the conversion of acetate into acetyl-CoA (AcCoA), an essential intermediate at the junction of anabolic and catabolic pathways. AcsA undergoes a two-step reaction. In the first half reaction, AcsA combines acetate with ATP to form acetyl-adenylate (AcAMP) intermediate. In the second half reaction, it can then transfer the acetyl group from AcAMP to the sulfhydryl group of CoA, forming the product AcCoA. This Shewanella pealeana (strain ATCC 700345 / ANG-SQ1) protein is Acetyl-coenzyme A synthetase.